The chain runs to 296 residues: 4-hydroxybenzoate octaprenyltransferase (296 aa).

The next 8 membrane-spanning stretches (helical) occupy residues 28–48, 52–72, 102–122, 146–166, 169–189, 219–239, 241–261, and 275–295; these read PIGIYLLLWPTLWALWIAGKG, LANIVIFVLGVVLTRAGGCVI, ALVFFALLMGVSFLLVLCTNA, YYPQVVLGAAFSWGMPMAFTA, GELPATAWLLWIANLLWTVGY, VIILTLQVLSLGCLVLAGSKF, LGMWFHLGLLVAAGCYAWEFW, and FLHNHWAGLAIFVGIVLDYAL.

The protein belongs to the UbiA prenyltransferase family. Mg(2+) serves as cofactor.

It localises to the cell inner membrane. It catalyses the reaction all-trans-octaprenyl diphosphate + 4-hydroxybenzoate = 4-hydroxy-3-(all-trans-octaprenyl)benzoate + diphosphate. Its pathway is cofactor biosynthesis; ubiquinone biosynthesis. In terms of biological role, catalyzes the prenylation of para-hydroxybenzoate (PHB) with an all-trans polyprenyl group. Mediates the second step in the final reaction sequence of ubiquinone-8 (UQ-8) biosynthesis, which is the condensation of the polyisoprenoid side chain with PHB, generating the first membrane-bound Q intermediate 3-octaprenyl-4-hydroxybenzoate. The sequence is that of 4-hydroxybenzoate octaprenyltransferase from Pseudomonas fluorescens (strain Pf0-1).